The sequence spans 88 residues: Cell division topological specificity factor (88 aa).

Belongs to the MinE family.

Prevents the cell division inhibition by proteins MinC and MinD at internal division sites while permitting inhibition at polar sites. This ensures cell division at the proper site by restricting the formation of a division septum at the midpoint of the long axis of the cell. This chain is Cell division topological specificity factor, found in Citrobacter koseri (strain ATCC BAA-895 / CDC 4225-83 / SGSC4696).